A 488-amino-acid chain; its full sequence is Alpha,alpha-trehalose-phosphate synthase [UDP-forming] 56 kDa subunit (488 aa).

D-glucose 6-phosphate contacts are provided by tyrosine 102 and aspartate 156. UDP contacts are provided by arginine 293 and lysine 298. 2 residues coordinate UDP-alpha-D-glucose: arginine 293 and lysine 298. A D-glucose 6-phosphate-binding site is contributed by arginine 331. UDP is bound by residues isoleucine 370 and 396–400 (LVSYE). Residues isoleucine 370 and 392-400 (DGMNLVSYE) contribute to the UDP-alpha-D-glucose site.

It belongs to the glycosyltransferase 20 family. Trehalose synthase/phosphatase complex contains three or four polypeptides of 56 kDa (TPS1), 102 kDa (TPS2), 115 kDa (TPS3) and 123 kDa (TSL1).

It catalyses the reaction D-glucose 6-phosphate + UDP-alpha-D-glucose = alpha,alpha-trehalose 6-phosphate + UDP + H(+). It functions in the pathway carbohydrate biosynthesis. Functionally, synthase catalytic subunit of the trehalose synthase complex that catalyzes the production of trehalose from glucose-6-phosphate and UDP-alpha-D-glucose in a two step process. Can function independently of the complex. This Kluyveromyces lactis (strain ATCC 8585 / CBS 2359 / DSM 70799 / NBRC 1267 / NRRL Y-1140 / WM37) (Yeast) protein is Alpha,alpha-trehalose-phosphate synthase [UDP-forming] 56 kDa subunit.